We begin with the raw amino-acid sequence, 238 residues long: Uridylate kinase (238 aa).

12 to 15 (KLSG) serves as a coordination point for ATP. UMP is bound at residue Gly-54. Residues Gly-55 and Arg-59 each coordinate ATP. UMP contacts are provided by residues Asp-74 and 135–142 (TGNPFFTT). Residues Thr-162, Tyr-168, and Asp-171 each contribute to the ATP site.

The protein belongs to the UMP kinase family. Homohexamer.

It localises to the cytoplasm. The enzyme catalyses UMP + ATP = UDP + ADP. It functions in the pathway pyrimidine metabolism; CTP biosynthesis via de novo pathway; UDP from UMP (UMPK route): step 1/1. Inhibited by UTP. In terms of biological role, catalyzes the reversible phosphorylation of UMP to UDP. The sequence is that of Uridylate kinase from Bordetella parapertussis (strain 12822 / ATCC BAA-587 / NCTC 13253).